The primary structure comprises 399 residues: Delta(12) acyl-lipid conjugase (11E,13E-forming) (399 aa).

The tract at residues arginine 11 to glutamate 30 is disordered. The next 2 helical transmembrane spans lie at phenylalanine 61–tyrosine 81 and leucine 93–alanine 113. Residues histidine 114 to histidine 118 carry the Histidine box-1 motif. Residues leucine 126 to phenylalanine 146 form a helical membrane-spanning segment. Residues histidine 150–histidine 154 carry the Histidine box-2 motif. 3 helical membrane-spanning segments follow: residues valine 188–serine 208, valine 232–alanine 252, and glycine 258–isoleucine 278. A Histidine box-3 motif is present at residues histidine 325–histidine 329.

The protein belongs to the fatty acid desaturase type 1 family. In terms of tissue distribution, expressed in developing seeds, but not in leaves.

Its subcellular location is the membrane. It catalyses the reaction a (9Z,12Z)-octadecadienoyl-containing glycerolipid + 2 Fe(II)-[cytochrome b5] + O2 + 2 H(+) = a (9Z,11E,13E)-octadecatrienoyl-containing glycerolipid + 2 Fe(III)-[cytochrome b5] + 2 H2O. The catalysed reaction is (9Z,12Z,15Z)-octadecatrienoyl-containing glycerolipid + 2 Fe(II)-[cytochrome b5] + O2 + 2 H(+) = a (9Z,11E,13E,15Z)-octadecatetraenoyl-containing glycerolipid + 2 Fe(III)-[cytochrome b5] + 2 H2O. It functions in the pathway lipid metabolism; polyunsaturated fatty acid biosynthesis. Its function is as follows. Converts linoleic acid to alpha-eleostearic acid (18:3(9Z,11E,13E)) and alpha-linolenic acid to alpha-parinaric acid (18:4(9Z,11E, 13E, 15Z)). Converts a single cis double bond at carbon 12 to two conjugated trans bonds at positions 11 and 13. The polypeptide is Delta(12) acyl-lipid conjugase (11E,13E-forming) (Momordica charantia (Bitter gourd)).